The chain runs to 375 residues: Putative nuclease YhcG (375 aa).

Interacts with DNA processing enzymes, including the restriction complex HsdMRS, the integrases IntF and IntS, and the recombinase PinE.

Functionally, may be a nuclease involved in DNA recombination and repair. In Escherichia coli (strain K12), this protein is Putative nuclease YhcG (yhcG).